A 505-amino-acid chain; its full sequence is MKGGFSLNSELQLEADAVIIGSGAGGASVADVLTAAGLYVIMLEEGGHVPSSSASPFASEAFAAAWRGGGLTAAIGRPPIAYAEGRCVGGGTEINSAIAQRADSDLLDQWRKLYKIENFTPDELSQYYGRAETTVNASLTPGPLGRPTDILRLGGEALGWKVSELKRGQRDCKGANRCSFICPNGAKQSMAVTLLPKSMDRGMRLLARTRVDKIRIEKGRAAVVVAQLQDAGGQGVHVRVKAGLVFVCAGAIHTPALLRRSGLRKRIGDTLRIHPTIRATALFDEPVDAHQSRLPLTAVTEFMPEQRIGGSVFTPAVFGLSLAEDWTNRGDLMQAWRLCGSYYGMIRPRGVGSVRPLPGINEPLVSFKLAPEDWISLGQVLTLLGQAMFAAGARKVIPSISGHEGWTNPDEVDEFRNKPLPEKATNLMTIHLFSTCPPGEHRDACAVDSYGRVRGVENLFVADGSVIPEAPGVNPQMTIMALAFRIAEAALSHSSRERAQSAARE.

H431 serves as the catalytic Proton acceptor.

The protein belongs to the GMC oxidoreductase family. FAD is required as a cofactor.

This is an uncharacterized protein from Sinorhizobium fredii (strain NBRC 101917 / NGR234).